The following is a 339-amino-acid chain: Uridylate kinase PUMPKIN, chloroplastic (339 aa).

The N-terminal 53 residues, 1–53, are a transit peptide targeting the chloroplast; sequence MAIPLPLTSCSPISTSSSISRTSFVPLTLRNRTFFSNQNYSRRVLISCSSSLS. A compositionally biased stretch (low complexity) spans 52 to 79; the sequence is LSSDNGSSPDSMNGNGNGNGSSLNGQSS. Residues 52 to 89 are disordered; the sequence is LSSDNGSSPDSMNGNGNGNGSSLNGQSSFPRLPSFDGT. ATP is bound at residue 102-105; sequence KVSG. The involved in allosteric activation by GTP stretch occupies residues 110–115; it reads GDEEQN. Position 144 (glycine 144) interacts with UMP. Positions 145 and 149 each coordinate ATP. Aspartate 165 is a binding site for UMP. Residues 180–184 and 189–191 each bind ATP; these read QATME and PTR. 226-233 is a UMP binding site; sequence TGNPFFTT. ATP-binding residues include threonine 253, phenylalanine 259, and aspartate 262.

The protein belongs to the UMP kinase family. Homomultimer. Homohexamer. Forms RNA-containing megadalton-sized complexes. Expressed exclusively in leaves, but not in roots.

It is found in the plastid. The protein resides in the chloroplast stroma. The catalysed reaction is UMP + ATP = UDP + ADP. The protein operates within pyrimidine metabolism; CTP biosynthesis via de novo pathway; UDP from UMP (UMPK route): step 1/1. Functionally, catalyzes the reversible phosphorylation of UMP to UDP. Required for specific post-transcriptional processes of many plastid transcripts (e.g. PSI (PsaA, PsaF), PSII (D1, CP43, CP47), Cytochrome b(6)f (Cytb(6)), ATP synthase (AtpC), LHCs (LHCa3, LHCb2), and NDH (NdhH)), thus being essential for retaining photosynthetic activity in chloroplasts. Associates with group II introns of the plastid transcripts trnG-UCC, trnV-UAC, petB, petD and ndhA to stabilize corresponding precursor RNAs. This is Uridylate kinase PUMPKIN, chloroplastic from Arabidopsis thaliana (Mouse-ear cress).